The following is a 486-amino-acid chain: Glycogen synthase 2 (486 aa).

Residue Lys-15 coordinates ADP-alpha-D-glucose.

Belongs to the glycosyltransferase 1 family. Bacterial/plant glycogen synthase subfamily.

The catalysed reaction is [(1-&gt;4)-alpha-D-glucosyl](n) + ADP-alpha-D-glucose = [(1-&gt;4)-alpha-D-glucosyl](n+1) + ADP + H(+). It functions in the pathway glycan biosynthesis; glycogen biosynthesis. Functionally, synthesizes alpha-1,4-glucan chains using ADP-glucose. The protein is Glycogen synthase 2 (glgA2) of Rhizobium meliloti (strain 1021) (Ensifer meliloti).